The primary structure comprises 211 residues: Adenylate kinase (211 aa).

10–15 (GSGKGT) contributes to the ATP binding site. Positions 30–59 (STGDLFRENILNSTALGQEIKKIVERGELV) are NMP. AMP-binding positions include T31, R36, 57–59 (ELV), 85–88 (GFPR), and Q92. Positions 121-158 (GRRICKSCNNIFNIYTLTTKKNGICDVCGGDLYQREDD) are LID. An ATP-binding site is contributed by R122. Zn(2+)-binding residues include C125 and C128. 131–132 (IF) is an ATP binding site. Zn(2+)-binding residues include C145 and C148. Residues R155 and R166 each coordinate AMP. An ATP-binding site is contributed by V194.

This sequence belongs to the adenylate kinase family. As to quaternary structure, monomer.

The protein localises to the cytoplasm. The enzyme catalyses AMP + ATP = 2 ADP. The protein operates within purine metabolism; AMP biosynthesis via salvage pathway; AMP from ADP: step 1/1. Functionally, catalyzes the reversible transfer of the terminal phosphate group between ATP and AMP. Plays an important role in cellular energy homeostasis and in adenine nucleotide metabolism. This Borreliella burgdorferi (strain ATCC 35210 / DSM 4680 / CIP 102532 / B31) (Borrelia burgdorferi) protein is Adenylate kinase.